Here is a 463-residue protein sequence, read N- to C-terminus: Perilipin-5 (463 aa).

Residues methionine 1 to leucine 32 are disordered. An interaction with LIPE region spans residues methionine 1–glutamine 123. An essential for lipid droplet targeting region spans residues methionine 1–leucine 188. Serine 17, serine 163, and serine 337 each carry phosphoserine. Residues serine 17 to glycine 26 are compositionally biased toward polar residues. The segment at valine 200 to phenylalanine 463 is interaction with PNPLA2 and ABHD5. The disordered stretch occupies residues alanine 433–phenylalanine 463. The interval glutamine 444–phenylalanine 463 is necessary for mitochondria recruitment at the lipid droplet surface.

Belongs to the perilipin family. In terms of assembly, homooligomer. Interacts with PNPLA2; prevents interaction of PNPLA2 with ABHD5. Interacts with ABHD5; targets ABHD5 to lipid droplets and promotes interaction of ABHD5 with PNPLA2. Interacts with LIPE. In terms of processing, phosphorylated by PKA. Phosphorylated on serine in skeletal muscle at rest or with lipolytic stimulation. Highly expressed in oxidative tissues, including heart, liver, brown adipose tissue (BAT) and slow-twitch fibers of skeletal muscle. Lower expression in epididymal white adipose tissue and anterior tibialis and quadriceps. Expressed in adrenal glands. Isoform 2 has the highest expression in heart.

The protein resides in the lipid droplet. It localises to the cytoplasm. Its subcellular location is the mitochondrion. Its function is as follows. Lipid droplet-associated protein that maintains the balance between lipogenesis and lipolysis and also regulates fatty acid oxidation in oxidative tissues. Recruits mitochondria to the surface of lipid droplets and is involved in lipid droplet homeostasis by regulating both the storage of fatty acids in the form of triglycerides and the release of fatty acids for mitochondrial fatty acid oxidation. In lipid droplet triacylglycerol hydrolysis, plays a role as a scaffolding protein for three major key lipolytic players: ABHD5, PNPLA2 and LIPE. Reduces the triacylglycerol hydrolase activity of PNPLA2 by recruiting and sequestering PNPLA2 to lipid droplets. Phosphorylation by PKA enables lipolysis probably by promoting release of ABHD5 from the perilipin scaffold and by facilitating interaction of ABHD5 with PNPLA2. Also increases lipolysis through interaction with LIPE and upon PKA-mediated phosphorylation of LIPE. This Mus musculus (Mouse) protein is Perilipin-5 (Plin5).